Here is a 274-residue protein sequence, read N- to C-terminus: Elongation factor Ts (274 aa).

Positions 79 to 82 (TDFV) are involved in Mg(2+) ion dislocation from EF-Tu.

The protein belongs to the EF-Ts family.

It localises to the cytoplasm. Associates with the EF-Tu.GDP complex and induces the exchange of GDP to GTP. It remains bound to the aminoacyl-tRNA.EF-Tu.GTP complex up to the GTP hydrolysis stage on the ribosome. The sequence is that of Elongation factor Ts from Porphyromonas gingivalis (strain ATCC 33277 / DSM 20709 / CIP 103683 / JCM 12257 / NCTC 11834 / 2561).